Here is a 118-residue protein sequence, read N- to C-terminus: Hydrogenase maturation factor HypA (118 aa).

H2 contributes to the Ni(2+) binding site. The Zn(2+) site is built by C73, C76, C89, and C92.

This sequence belongs to the HypA/HybF family.

Its function is as follows. Involved in the maturation of [NiFe] hydrogenases. Required for nickel insertion into the metal center of the hydrogenase. The polypeptide is Hydrogenase maturation factor HypA (Shewanella oneidensis (strain ATCC 700550 / JCM 31522 / CIP 106686 / LMG 19005 / NCIMB 14063 / MR-1)).